We begin with the raw amino-acid sequence, 152 residues long: Endoribonuclease YbeY (152 aa).

Residues His-113, His-117, and His-123 each coordinate Zn(2+).

Belongs to the endoribonuclease YbeY family. The cofactor is Zn(2+).

The protein resides in the cytoplasm. Single strand-specific metallo-endoribonuclease involved in late-stage 70S ribosome quality control and in maturation of the 3' terminus of the 16S rRNA. The chain is Endoribonuclease YbeY from Acidovorax sp. (strain JS42).